The primary structure comprises 128 residues: Holo-[acyl-carrier-protein] synthase (128 aa).

Residues Asp-8 and Glu-58 each contribute to the Mg(2+) site.

The protein belongs to the P-Pant transferase superfamily. AcpS family. The cofactor is Mg(2+).

It localises to the cytoplasm. The catalysed reaction is apo-[ACP] + CoA = holo-[ACP] + adenosine 3',5'-bisphosphate + H(+). Transfers the 4'-phosphopantetheine moiety from coenzyme A to a Ser of acyl-carrier-protein. This chain is Holo-[acyl-carrier-protein] synthase, found in Alkalilimnicola ehrlichii (strain ATCC BAA-1101 / DSM 17681 / MLHE-1).